The sequence spans 274 residues: 3-methyl-2-oxobutanoate hydroxymethyltransferase (274 aa).

D49 and D88 together coordinate Mg(2+). 3-methyl-2-oxobutanoate-binding positions include 49 to 50, D88, and K118; that span reads DS. E120 serves as a coordination point for Mg(2+). E187 acts as the Proton acceptor in catalysis.

The protein belongs to the PanB family. As to quaternary structure, homodecamer; pentamer of dimers. Requires Mg(2+) as cofactor.

The protein resides in the cytoplasm. The catalysed reaction is 3-methyl-2-oxobutanoate + (6R)-5,10-methylene-5,6,7,8-tetrahydrofolate + H2O = 2-dehydropantoate + (6S)-5,6,7,8-tetrahydrofolate. It functions in the pathway cofactor biosynthesis; (R)-pantothenate biosynthesis; (R)-pantoate from 3-methyl-2-oxobutanoate: step 1/2. Its function is as follows. Catalyzes the reversible reaction in which hydroxymethyl group from 5,10-methylenetetrahydrofolate is transferred onto alpha-ketoisovalerate to form ketopantoate. The chain is 3-methyl-2-oxobutanoate hydroxymethyltransferase from Paramagnetospirillum magneticum (strain ATCC 700264 / AMB-1) (Magnetospirillum magneticum).